Here is a 272-residue protein sequence, read N- to C-terminus: 2-amino-3,7-dideoxy-D-threo-hept-6-ulosonate synthase (272 aa).

Asp-33 acts as the Proton acceptor in catalysis. 1-deoxy-D-threo-hexo-2,5-diulose 6-phosphate-binding positions include 33–37 (DHGVS) and 153–155 (YPR). Tyr-153 (proton donor) is an active-site residue. Lys-184 functions as the Schiff-base intermediate with substrate in the catalytic mechanism. 1-deoxy-D-threo-hexo-2,5-diulose 6-phosphate is bound by residues 209–210 (GG) and 237–238 (GR).

This sequence belongs to the DeoC/FbaB aldolase family. ADHS subfamily. Homodecamer.

The catalysed reaction is 1-deoxy-D-threo-hexo-2,5-diulose 6-phosphate + L-aspartate 4-semialdehyde = 2,3-dioxopropyl phosphate + 2-amino-2,3,7-trideoxy-D-lyxo-hept-6-ulosonate. Catalyzes a transaldol reaction between 6-deoxy-5-ketofructose 1-phosphate (DKFP) and L-aspartate semialdehyde (ASA) with an elimination of hydroxypyruvaldehyde phosphate to yield 2-amino-3,7-dideoxy-D-threo-hept-6-ulosonate (ADH). Plays a key role in an alternative pathway of the biosynthesis of 3-dehydroquinate (DHQ), which is involved in the canonical pathway for the biosynthesis of aromatic amino acids. This Methanococcus maripaludis (strain C7 / ATCC BAA-1331) protein is 2-amino-3,7-dideoxy-D-threo-hept-6-ulosonate synthase.